Here is a 401-residue protein sequence, read N- to C-terminus: 4-hydroxy-3-methylbut-2-en-1-yl diphosphate synthase (ferredoxin) (401 aa).

Cys-306, Cys-309, Cys-340, and Glu-347 together coordinate [4Fe-4S] cluster.

The protein belongs to the IspG family. [4Fe-4S] cluster is required as a cofactor.

The catalysed reaction is (2E)-4-hydroxy-3-methylbut-2-enyl diphosphate + 2 oxidized [2Fe-2S]-[ferredoxin] + H2O = 2-C-methyl-D-erythritol 2,4-cyclic diphosphate + 2 reduced [2Fe-2S]-[ferredoxin] + H(+). The protein operates within isoprenoid biosynthesis; isopentenyl diphosphate biosynthesis via DXP pathway; isopentenyl diphosphate from 1-deoxy-D-xylulose 5-phosphate: step 5/6. Converts 2C-methyl-D-erythritol 2,4-cyclodiphosphate (ME-2,4cPP) into 1-hydroxy-2-methyl-2-(E)-butenyl 4-diphosphate. This is 4-hydroxy-3-methylbut-2-en-1-yl diphosphate synthase (ferredoxin) from Synechococcus sp. (strain CC9902).